Reading from the N-terminus, the 651-residue chain is UvrABC system protein C (651 aa).

Positions 21–100 (TEPGCYLMRD…IKNQQPHFNV (80 aa)) constitute a GIY-YIG domain. The UVR domain maps to 210–245 (DELRQLLNQQMERYAERLDFESAARIRDQLQGIDQL).

The protein belongs to the UvrC family. In terms of assembly, interacts with UvrB in an incision complex.

The protein resides in the cytoplasm. The UvrABC repair system catalyzes the recognition and processing of DNA lesions. UvrC both incises the 5' and 3' sides of the lesion. The N-terminal half is responsible for the 3' incision and the C-terminal half is responsible for the 5' incision. In Synechococcus sp. (strain CC9311), this protein is UvrABC system protein C.